Consider the following 292-residue polypeptide: Bifunctional protein FolD (292 aa).

NADP(+) contacts are provided by residues 171-173, Ile-196, and Ile-237; that span reads GAS.

It belongs to the tetrahydrofolate dehydrogenase/cyclohydrolase family. As to quaternary structure, homodimer.

It carries out the reaction (6R)-5,10-methylene-5,6,7,8-tetrahydrofolate + NADP(+) = (6R)-5,10-methenyltetrahydrofolate + NADPH. It catalyses the reaction (6R)-5,10-methenyltetrahydrofolate + H2O = (6R)-10-formyltetrahydrofolate + H(+). It participates in one-carbon metabolism; tetrahydrofolate interconversion. Functionally, catalyzes the oxidation of 5,10-methylenetetrahydrofolate to 5,10-methenyltetrahydrofolate and then the hydrolysis of 5,10-methenyltetrahydrofolate to 10-formyltetrahydrofolate. In Helicobacter acinonychis (strain Sheeba), this protein is Bifunctional protein FolD.